Consider the following 104-residue polypeptide: Large ribosomal subunit protein uL24 (104 aa).

The protein belongs to the universal ribosomal protein uL24 family. As to quaternary structure, part of the 50S ribosomal subunit.

One of two assembly initiator proteins, it binds directly to the 5'-end of the 23S rRNA, where it nucleates assembly of the 50S subunit. Its function is as follows. One of the proteins that surrounds the polypeptide exit tunnel on the outside of the subunit. The chain is Large ribosomal subunit protein uL24 from Brevibacillus brevis (strain 47 / JCM 6285 / NBRC 100599).